Reading from the N-terminus, the 365-residue chain is UDP-N-acetylglucosamine--N-acetylmuramyl-(pentapeptide) pyrophosphoryl-undecaprenol N-acetylglucosamine transferase (365 aa).

UDP-N-acetyl-alpha-D-glucosamine contacts are provided by residues 17–19, Asn-129, Arg-167, Ser-194, Ile-250, 269–274, and Gln-295; these read TGG and ALTVSE.

Belongs to the glycosyltransferase 28 family. MurG subfamily.

It is found in the cell inner membrane. It catalyses the reaction di-trans,octa-cis-undecaprenyl diphospho-N-acetyl-alpha-D-muramoyl-L-alanyl-D-glutamyl-meso-2,6-diaminopimeloyl-D-alanyl-D-alanine + UDP-N-acetyl-alpha-D-glucosamine = di-trans,octa-cis-undecaprenyl diphospho-[N-acetyl-alpha-D-glucosaminyl-(1-&gt;4)]-N-acetyl-alpha-D-muramoyl-L-alanyl-D-glutamyl-meso-2,6-diaminopimeloyl-D-alanyl-D-alanine + UDP + H(+). It participates in cell wall biogenesis; peptidoglycan biosynthesis. Functionally, cell wall formation. Catalyzes the transfer of a GlcNAc subunit on undecaprenyl-pyrophosphoryl-MurNAc-pentapeptide (lipid intermediate I) to form undecaprenyl-pyrophosphoryl-MurNAc-(pentapeptide)GlcNAc (lipid intermediate II). The chain is UDP-N-acetylglucosamine--N-acetylmuramyl-(pentapeptide) pyrophosphoryl-undecaprenol N-acetylglucosamine transferase from Shewanella violacea (strain JCM 10179 / CIP 106290 / LMG 19151 / DSS12).